The primary structure comprises 184 residues: Potassium-transporting ATPase KdpC subunit (184 aa).

A helical membrane pass occupies residues 10–30 (LTFLMVVLFAVIYPLAIYGIA).

The protein belongs to the KdpC family. The system is composed of three essential subunits: KdpA, KdpB and KdpC.

It is found in the cell inner membrane. Functionally, part of the high-affinity ATP-driven potassium transport (or Kdp) system, which catalyzes the hydrolysis of ATP coupled with the electrogenic transport of potassium into the cytoplasm. This subunit acts as a catalytic chaperone that increases the ATP-binding affinity of the ATP-hydrolyzing subunit KdpB by the formation of a transient KdpB/KdpC/ATP ternary complex. In Flavobacterium psychrophilum (strain ATCC 49511 / DSM 21280 / CIP 103535 / JIP02/86), this protein is Potassium-transporting ATPase KdpC subunit.